A 196-amino-acid chain; its full sequence is uncharacterized protein (196 aa).

CBS domains follow at residues 10 to 69 and 76 to 132; these read ARRD…NPDE and MSQP…LVAT. An ACP-type MB domain is found at 153–187; sequence IIEGVCDLCETYSEELRFVDGVWVCPECYEDILGR. Fe cation contacts are provided by Cys158, Cys161, Cys177, and Cys180. Residues Cys158, Cys161, Cys177, and Cys180 each contribute to the Zn(2+) site.

This is an uncharacterized protein from Methanopyrus kandleri (strain AV19 / DSM 6324 / JCM 9639 / NBRC 100938).